The chain runs to 130 residues: Small ribosomal subunit protein uS9 (130 aa).

Belongs to the universal ribosomal protein uS9 family.

The sequence is that of Small ribosomal subunit protein uS9 from Pseudomonas paraeruginosa (strain DSM 24068 / PA7) (Pseudomonas aeruginosa (strain PA7)).